Here is a 648-residue protein sequence, read N- to C-terminus: Macrolide export ATP-binding/permease protein MacB (648 aa).

Residues 5 to 243 enclose the ABC transporter domain; sequence LELKDIRRSY…TGGTEPVVNT (239 aa). 41-48 lines the ATP pocket; it reads GASGSGKS. Transmembrane regions (helical) follow at residues 273–293, 523–543, 576–596, and 611–631; these read LLTMLGIIIGIASVVSIVVVG, LFLTLVAVISLVVGGIGVMNI, AVLVCLVGGALGITLSLLIAF, and PLALLLAFLCSTVTGILFGWL.

This sequence belongs to the ABC transporter superfamily. Macrolide exporter (TC 3.A.1.122) family. In terms of assembly, homodimer. Part of the tripartite efflux system MacAB-TolC, which is composed of an inner membrane transporter, MacB, a periplasmic membrane fusion protein, MacA, and an outer membrane component, TolC. The complex forms a large protein conduit and can translocate molecules across both the inner and outer membranes. Interacts with MacA.

It localises to the cell inner membrane. Functionally, part of the tripartite efflux system MacAB-TolC. MacB is a non-canonical ABC transporter that contains transmembrane domains (TMD), which form a pore in the inner membrane, and an ATP-binding domain (NBD), which is responsible for energy generation. Confers resistance against macrolides. In Escherichia coli (strain UTI89 / UPEC), this protein is Macrolide export ATP-binding/permease protein MacB.